A 757-amino-acid polypeptide reads, in one-letter code: Cap-specific mRNA (nucleoside-2'-O-)-methyltransferase 1 (757 aa).

Positions 1–61 (MFQSNQYDEY…EDDEEEEDTP (61 aa)) are disordered. Composition is skewed to acidic residues over residues 18–32 (EENE…NENE) and 40–59 (GDQD…EEED). Residues 62 to 108 (KLSFGAKFLAKHGHIEGQGLGKEKDGRIDLIEVDRFQSTKGLGFAEN) enclose the G-patch domain. Positions 214 to 438 (IFINRAAVKM…ERYIICKNFL (225 aa)) constitute a RrmJ-type SAM-dependent 2'-O-MTase domain. Residues Gly-257, Glu-301, and Asp-352 each contribute to the S-adenosyl-L-methionine site. Catalysis depends on Lys-392, which acts as the Proton acceptor. Residues 538–548 (HKNRQKHHHNN) are compositionally biased toward basic residues. The tract at residues 538 to 670 (HKNRQKHHHN…NNNNNNNNKN (133 aa)) is disordered. Residues 549–569 (HSNNNNNNNNSNNNNNNNNQH) are compositionally biased toward low complexity. The segment covering 570 to 581 (QHQHHQHQHHQN) has biased composition (basic residues). Over residues 597–668 (NNNINNNSNN…NNNNNNNNNN (72 aa)) the composition is skewed to low complexity.

It catalyses the reaction a 5'-end (N(7)-methyl 5'-triphosphoguanosine)-ribonucleoside in mRNA + S-adenosyl-L-methionine = a 5'-end (N(7)-methyl 5'-triphosphoguanosine)-(2'-O-methyl-ribonucleoside) in mRNA + S-adenosyl-L-homocysteine + H(+). S-adenosyl-L-methionine-dependent methyltransferase that mediates mRNA cap1 2'-O-ribose methylation to the 5'-cap structure of mRNAs. Methylates the ribose of the first nucleotide of a m(7)GpppG-capped mRNA to produce m(7)GpppNmp (cap1). Cap1 modification is linked to higher levels of translation. In Dictyostelium discoideum (Social amoeba), this protein is Cap-specific mRNA (nucleoside-2'-O-)-methyltransferase 1.